The primary structure comprises 323 residues: Fructokinase-1 (323 aa).

This sequence belongs to the carbohydrate kinase PfkB family. As to expression, expressed in root, endosperm and leaf tissues.

The catalysed reaction is D-fructose + ATP = D-fructose 6-phosphate + ADP + H(+). It participates in glycan biosynthesis; starch biosynthesis. Its activity is regulated as follows. Completely inhibited at 50 mM ATP, but not inhibited at high fructose concentration. In terms of biological role, fructokinase that may play an important role in maintaining the flux of carbon towards starch formation. May also be involved in a sugar-sensing pathway. This chain is Fructokinase-1, found in Oryza sativa subsp. japonica (Rice).